The following is a 67-amino-acid chain: Probable Sec-independent protein translocase protein TatE (67 aa).

Residues 1–21 form a helical membrane-spanning segment; that stretch reads MEGISIAKLLIIGALIVLLFG. A disordered region spans residues 46 to 67; that stretch reads EDTSATRTTAEDVPAERVVHKD.

It belongs to the TatA/E family. TatE subfamily.

It localises to the cell inner membrane. Part of the twin-arginine translocation (Tat) system that transports large folded proteins containing a characteristic twin-arginine motif in their signal peptide across membranes. TatE shares overlapping functions with TatA. The polypeptide is Probable Sec-independent protein translocase protein TatE (Pantoea vagans (strain C9-1) (Pantoea agglomerans (strain C9-1))).